The sequence spans 205 residues: Putative 3-methyladenine DNA glycosylase (205 aa).

Belongs to the DNA glycosylase MPG family.

The polypeptide is Putative 3-methyladenine DNA glycosylase (Bacillus cereus (strain G9842)).